The chain runs to 213 residues: Regulatory protein RecX (213 aa).

It belongs to the RecX family.

The protein localises to the cytoplasm. Its function is as follows. Modulates RecA activity. The sequence is that of Regulatory protein RecX from Clostridium beijerinckii (strain ATCC 51743 / NCIMB 8052) (Clostridium acetobutylicum).